Here is a 251-residue protein sequence, read N- to C-terminus: NADPH-dependent oxidoreductase (251 aa).

The protein belongs to the flavin oxidoreductase frp family. FMN serves as cofactor.

Reduces FMN, organic nitro compounds and disulfide DTNB. Involved in maintenance of the cellular redox state and the disulfide stress response. In Staphylococcus haemolyticus (strain JCSC1435), this protein is NADPH-dependent oxidoreductase (nfrA).